The primary structure comprises 477 residues: Acylamidase (477 aa).

Residues lysine 82 and serine 157 each act as charge relay system in the active site. The Acyl-ester intermediate role is filled by serine 181.

The protein belongs to the amidase family.

The catalysed reaction is a monocarboxylic acid amide + H2O = a monocarboxylate + NH4(+). It carries out the reaction an anilide + H2O = aniline + a carboxylate + H(+). It catalyses the reaction an N-acyl-L-amino acid + H2O = an L-alpha-amino acid + a carboxylate. The enzyme catalyses an N-acetyl-L-cysteine-S-conjugate + H2O = an S-substituted L-cysteine + acetate. Amidase activity is completely suppressed by inhibitors of serine proteases (phenylmethylsulfonyl fluoride and diisopropyl fluorophosphate), partially inhibited by copper and mercury ions, but is not affected by inhibitors of aliphatic amidases (acetaldehyde and nitrophenyl disulfides) or by EDTA. Amidase with broad substrate specificity, catalyzing the hydrolysis of a wide range of N-substituted amides, and, to a lesser extent, the hydrolysis of non-substituted amides. Acid para-nitroanilides (4'-nitroacetanilide, Gly-pNA, Ala-pNA, Leu-pNA) are the best substrates for this enzyme. N-substituted acrylamides (isopropyl acrylamide, N,N-dimethyl-aminopropyl acrylamide, and methylene-bis-acrylamide), N-acetyl derivatives of glycine, alanine and leucine, and aliphatic amides (acetamide, acrylamide, isobutyramide, n-butyramide, and valeramide) can also be used as substrates but with less efficiency. In Rhodococcus erythropolis (Arthrobacter picolinophilus), this protein is Acylamidase.